The sequence spans 111 residues: Cytochrome c (111 aa).

An N-acetylalanine modification is found at alanine 1. Positions 22, 25, and 26 each coordinate heme c. Lysine 80 bears the N6,N6,N6-trimethyllysine mark. Position 88 (methionine 88) interacts with heme c. Lysine 94 carries the N6,N6,N6-trimethyllysine modification.

Belongs to the cytochrome c family. Binds 1 heme c group covalently per subunit.

The protein resides in the mitochondrion intermembrane space. In terms of biological role, electron carrier protein. The oxidized form of the cytochrome c heme group can accept an electron from the heme group of the cytochrome c1 subunit of cytochrome reductase. Cytochrome c then transfers this electron to the cytochrome oxidase complex, the final protein carrier in the mitochondrial electron-transport chain. The protein is Cytochrome c of Cucurbita maxima (Pumpkin).